The following is a 490-amino-acid chain: 5'-3' exonuclease PLD3 (490 aa).

The Cytoplasmic portion of the chain corresponds to Met-1–Trp-38. The chain crosses the membrane as a helical; Signal-anchor for type II membrane protein span at residues Val-39–Leu-59. Topologically, residues Trp-60–Leu-490 are lumenal. Cystine bridges form between Cys-77–Cys-239 and Cys-81–Cys-237. Residues Asn-97 and Asn-132 are each glycosylated (N-linked (GlcNAc...) asparagine). Residues Thr-196–Ser-223 form the PLD phosphodiesterase 1 domain. Active-site residues include His-201, Lys-203, and Asp-208. His-201 serves as the catalytic Proton donor. Residues His-201 and Lys-203 each coordinate phosphate. Asn-218 contributes to the phosphate binding site. 3 N-linked (GlcNAc...) asparagine glycosylation sites follow: Asn-236, Asn-284, and Asn-387. A disulfide bridge connects residues Cys-366 and Cys-487. The 27-residue stretch at Tyr-411–Tyr-437 folds into the PLD phosphodiesterase 2 domain. His-416 is a binding site for phosphate. Catalysis depends on His-416, which acts as the Nucleophile. Phe-438 is a binding site for Mg(2+).

The protein belongs to the phospholipase D family. As to quaternary structure, homodimer. Interacts with APP. N-glycosylated. In terms of processing, proteolytically processed to a soluble active form that is stable within endosomes and lysosomes. During transport through the secretory pathway becomes proteolysed by cysteine proteases, thereby releasing a stable soluble lysosomal lumenal polypeptide, whereas the transmembrane-bound fragment is rapidly degraded. Its transport route to lysosomes involves ubiquitination and the ESCRT complex. Post-translationally, ubiquitinated at N-terminus. Ubiquitination mediates sorting into lysosomes. In terms of tissue distribution, widely expressed. In the brain, high levels of expression are detected in the frontal, temporal and occipital cortices and hippocampus. Expressed at low level in corpus callosum. Expressed in plasmacytoid dendritic cells and monocytes (at protein level).

Its subcellular location is the endoplasmic reticulum membrane. It localises to the lysosome lumen. The protein resides in the early endosome membrane. It is found in the late endosome membrane. The protein localises to the golgi apparatus membrane. Its subcellular location is the endosome membrane. The enzyme catalyses Exonucleolytic cleavage in the 5'- to 3'-direction to yield nucleoside 3'-phosphates.. It catalyses the reaction a 5'-end 5'-dephospho-ribonucleotidyl-ribonucleotide-RNA + H2O = a ribonucleoside 3'-phosphate + a 5'-end dephospho-ribonucleoside-RNA + H(+). It carries out the reaction a ribonucleoside 3'-phosphate-2'-3'-cyclophospho-GMP + H2O = a ribonucleoside 3'-phosphate + 2',3'-cyclophospho-GMP + H(+). The catalysed reaction is a 5'-end 5'-dephospho-2'-deoxyribonucleotidyl-2'-deoxyribonucleotide in single-stranded DNA + H2O = a 5'-end dephospho-2'-deoxyribonucleoside in single-stranded DNA + a 2'-deoxyribonucleoside 3'-phosphate + H(+). The enzyme catalyses a 5'-end 5'-phospho-2'-deoxyribonucleotide in single-stranded DNA + H2O = a 5'-end 5'-dephospho-2'-deoxyribonucleotide in single-stranded DNA + phosphate. It catalyses the reaction a 3-lyso-sn-glycero-1-phospho-(3'-acyl-1'-sn-glycerol) + a 1-acyl-sn-glycerol = a 3-acyl-sn-glycero-1-phospho-(3'-acyl-1'-sn-glycerol) + glycerol. It carries out the reaction 3-lyso-sn-glycero-1-phospho-(3'-(9Z-octadecenoyl)-1'-sn-glycerol) + 1-(9Z-octadecenoyl)-sn-glycerol = 3-(9Z-octadecenoyl)-sn-glycero-1-phospho-(3'-(9Z-octadecenoyl)-1'-sn-glycerol) + glycerol. With respect to regulation, the exonuclease activity toward ssDNA substrate is Ca(2+) and Mg(2+)-independent, but it is inhibited by Fe(2+), Cu(2+) and to a lesser extent Zn(2+) ions. In terms of biological role, 5'-&gt;3' exonuclease that hydrolyzes the phosphodiester bond of single-stranded DNA (ssDNA) and RNA molecules to form nucleoside 3'-monophosphates and 5'-end 5'-hydroxy deoxyribonucleotide/ribonucleotide fragments. Partially redundant with PLD4, can cleave all four nucleotides displaying higher efficiency for ssDNA and RNA fragments initiated with uridine and guanosine residues and lower efficiency for cytidine-initiated substrates. As a result, it does not always degrade polynucleotides to the single nucleotide level, it can stall at specific sites sparing certain fragments from exonucleolytic degradation. Processes self and pathogenic ssDNA and RNA molecules that reach the endolysosomal compartment via phagocytosis or autophagy and may serve as 'danger' signals for recognition by innate immune receptors such as toll-like receptors (TLRs). Degrades mitochondrial CpG-rich ssDNA fragments to prevent TLR9 activation and autoinflammatory response, but it can cleave viral RNA to generate ligands for TLR7 activation and initiate antiviral immune responses. In plasmacytoid dendritic cells, it cooperates with endonuclease RNASET2 to release 2',3'-cyclic guanosine monophosphate (2',3'-cGMP), a potent stimulatory ligand for TLR7. Produces 2',3'-cGMPs and cytidine-rich RNA fragments that occupy TLR7 ligand-binding pockets and trigger a signaling-competent state. Can exert polynucleotide phosphatase activity toward 5'-phosphorylated ssDNA substrates although at a slow rate. Transphosphatidylase that catalyzes the exchange with R to S stereo-inversion of the glycerol moiety between (S,R)-lysophosphatidylglycerol (LPG) and monoacylglycerol (MAG) substrates to yield (S,S)-bis(monoacylglycero)phosphate (BMP). Can synthesize a variety of (S,S)-BMPs representing the main phospholipid constituent of lysosomal intralumenal vesicle (ILV) membranes that bind acid hydrolases for lipid degradation. Regulates the homeostasis and interorganellar communication of the endolysosomal system with an overall impact on cellular removal of dysfunctional organelles via autophagy as well as proper protein and lipid turnover. May play a role in myotube formation in response to ER stress. In Homo sapiens (Human), this protein is 5'-3' exonuclease PLD3.